Consider the following 2871-residue polypeptide: Fibrillin-1 (2871 aa).

Residues Met-1–Gly-24 form the signal peptide. The propeptide occupies Ala-25–Arg-44. The fibrillin unique N-terminal (FUN) domain stretch occupies residues Arg-45–Ile-81. The segment at Arg-45 to Thr-450 is N-terminal domain. 11 disulfide bridges follow: Cys-59–Cys-68, Cys-67–Cys-80, Cys-85–Cys-94, Cys-89–Cys-100, Cys-102–Cys-111, Cys-119–Cys-129, Cys-123–Cys-134, Cys-136–Cys-145, Cys-150–Cys-160, Cys-154–Cys-166, and Cys-168–Cys-177. 3 EGF-like domains span residues Ile-81 to Gly-112, Ser-115 to Gly-146, and Gln-147 to Glu-178. The segment at Cys-119–Ile-329 is interaction with MFAP4. One can recognise a TB 1 domain in the interval Gly-184–Ile-236. Positions Cys-195 to Cys-221 are hybrid domain 1. The EGF-like 4; calcium-binding domain occupies Asp-246–Glu-287. 6 disulfide bridges follow: Cys-250-Cys-262, Cys-257-Cys-271, Cys-273-Cys-286, Cys-292-Cys-304, Cys-299-Cys-313, and Cys-315-Cys-328. Residue Ser-268 is glycosylated (O-linked (Glc) serine). Residues Asp-288–Ile-329 form the EGF-like 5; calcium-binding domain. The TB 2 domain occupies Gly-334–Cys-389. Asn-448 carries an N-linked (GlcNAc...) asparagine glycan. Positions Val-449–Ile-489 constitute an EGF-like 6 domain. Disulfide bonds link Cys-453–Cys-465, Cys-460–Cys-474, Cys-476–Cys-488, Cys-494–Cys-504, Cys-499–Cys-513, Cys-515–Cys-528, Cys-534–Cys-546, Cys-541–Cys-555, Cys-557–Cys-570, Cys-576–Cys-587, Cys-582–Cys-596, Cys-598–Cys-611, Cys-617–Cys-628, Cys-623–Cys-637, and Cys-639–Cys-652. An O-linked (Glc) serine glycan is attached at Ser-471. Residues Asp-490–Arg-529 form the EGF-like 7; calcium-binding domain. The O-linked (Glc) serine glycan is linked to Ser-510. In terms of domain architecture, EGF-like 8; calcium-binding spans Asp-530–Glu-571. Residue Ser-552 is glycosylated (O-linked (Glc) serine). Positions Asp-572–Lys-612 constitute an EGF-like 9; calcium-binding domain. A glycan (O-linked (Glc) serine) is linked at Ser-593. The EGF-like 10; calcium-binding domain occupies Asp-613–Val-653. An O-linked (Glc) serine glycan is attached at Ser-634. In terms of domain architecture, TB 3 spans Ser-659 to Cys-711. In terms of domain architecture, EGF-like 11; calcium-binding spans Asp-723–Val-764. 16 cysteine pairs are disulfide-bonded: Cys-727–Cys-739, Cys-734–Cys-748, Cys-750–Cys-763, Cys-769–Cys-781, Cys-776–Cys-790, Cys-792–Cys-805, Cys-811–Cys-821, Cys-816–Cys-830, Cys-832–Cys-845, Cys-853–Cys-875, Cys-862–Cys-887, Cys-876–Cys-890, Cys-896–Cys-908, Cys-914–Cys-926, Cys-921–Cys-935, and Cys-937–Cys-950. One can recognise an EGF-like 12; calcium-binding domain in the interval Asp-765–Glu-806. An O-linked (Glc) serine glycan is attached at Ser-787. The 40-residue stretch at Asp-807 to Ile-846 folds into the EGF-like 13; calcium-binding domain. Ser-827 is a glycosylation site (O-linked (Glc) serine). Residues Gly-851–Arg-902 enclose the TB 4 domain. The segment at Cys-862–Cys-887 is hybrid domain 2. In terms of domain architecture, EGF-like 14; calcium-binding spans Asp-910 to Leu-951. A TB 5 domain is found at Glu-956 to Cys-1008. Positions Asp-1028–Thr-1069 constitute an EGF-like 15; calcium-binding domain. Cystine bridges form between Cys-1032/Cys-1044, Cys-1039/Cys-1053, Cys-1055/Cys-1068, Cys-1074/Cys-1086, Cys-1081/Cys-1095, Cys-1097/Cys-1111, Cys-1117/Cys-1129, Cys-1124/Cys-1138, Cys-1140/Cys-1153, Cys-1159/Cys-1171, Cys-1166/Cys-1180, Cys-1182/Cys-1195, Cys-1201/Cys-1212, Cys-1208/Cys-1221, Cys-1223/Cys-1236, Cys-1242/Cys-1254, Cys-1249/Cys-1263, Cys-1265/Cys-1278, Cys-1284/Cys-1296, Cys-1291/Cys-1305, Cys-1307/Cys-1320, Cys-1326/Cys-1339, Cys-1333/Cys-1348, Cys-1350/Cys-1361, Cys-1367/Cys-1380, Cys-1374/Cys-1389, Cys-1391/Cys-1402, Cys-1408/Cys-1420, Cys-1415/Cys-1429, Cys-1431/Cys-1444, Cys-1450/Cys-1461, Cys-1456/Cys-1470, Cys-1472/Cys-1485, Cys-1491/Cys-1502, Cys-1497/Cys-1511, Cys-1513/Cys-1526, Cys-1534/Cys-1562, Cys-1549/Cys-1574, Cys-1563/Cys-1577, Cys-1564/Cys-1589, Cys-1610/Cys-1622, Cys-1617/Cys-1631, Cys-1633/Cys-1646, Cys-1652/Cys-1663, Cys-1658/Cys-1672, and Cys-1674/Cys-1687. Ser-1050 carries O-linked (Glc) serine glycosylation. N-linked (GlcNAc...) asparagine glycosylation occurs at Asn-1067. Residues Asp-1070 to Met-1112 enclose the EGF-like 16; calcium-binding domain. The EGF-like 17; calcium-binding domain maps to Asp-1113–Ile-1154. Ser-1135 carries O-linked (Glc) serine glycosylation. Asn-1149 is a glycosylation site (N-linked (GlcNAc...) asparagine). The region spanning Asp-1155–Val-1196 is the EGF-like 18; calcium-binding domain. One can recognise an EGF-like 19; calcium-binding domain in the interval Asp-1197–Thr-1237. A glycan (O-linked (Glc) serine) is linked at Ser-1218. Positions Asp-1238–Val-1279 constitute an EGF-like 20; calcium-binding domain. The EGF-like 21; calcium-binding domain occupies Asp-1280–Thr-1321. O-linked (Glc) serine glycosylation occurs at Ser-1302. The EGF-like 22; calcium-binding domain occupies Asp-1322 to Thr-1362. A glycan (O-linked (Glc) serine) is linked at Ser-1345. The 41-residue stretch at Asp-1363 to Thr-1403 folds into the EGF-like 23; calcium-binding domain. N-linked (GlcNAc...) asparagine glycosylation is present at Asn-1369. A glycan (O-linked (Glc) serine) is linked at Ser-1386. Residues Asp-1404 to Glu-1445 form the EGF-like 24; calcium-binding domain. An EGF-like 25; calcium-binding domain is found at Asp-1446–Thr-1486. N-linked (GlcNAc...) asparagine glycosylation occurs at Asn-1484. Positions Asp-1487–Val-1527 constitute an EGF-like 26; calcium-binding domain. O-linked (Glc) serine glycosylation occurs at Ser-1508. The segment at Asp-1528–Arg-2731 is C-terminal domain. The region spanning Gly-1532–Cys-1589 is the TB 6 domain. Residues Arg-1541 to Asp-1543 carry the Cell attachment site motif. N-linked (GlcNAc...) asparagine glycosylation occurs at Asn-1581. Residues Asp-1606–Asp-1647 enclose the EGF-like 27; calcium-binding domain. O-linked (Glc) serine glycosylation is present at Ser-1628. The region spanning Asp-1648 to Met-1688 is the EGF-like 28; calcium-binding domain. An N-linked (GlcNAc...) asparagine glycan is attached at Asn-1669. Positions Ser-1693 to Cys-1748 constitute a TB 7 domain. Residues Asn-1703 and Asn-1713 are each glycosylated (N-linked (GlcNAc...) asparagine). An EGF-like 29; calcium-binding domain is found at Asp-1766–Glu-1807. 40 disulfide bridges follow: Cys-1770–Cys-1782, Cys-1777–Cys-1791, Cys-1793–Cys-1806, Cys-1812–Cys-1824, Cys-1818–Cys-1833, Cys-1835–Cys-1847, Cys-1853–Cys-1865, Cys-1860–Cys-1874, Cys-1876–Cys-1889, Cys-1895–Cys-1905, Cys-1900–Cys-1914, Cys-1916–Cys-1928, Cys-1934–Cys-1947, Cys-1942–Cys-1956, Cys-1958–Cys-1971, Cys-1977–Cys-1989, Cys-1984–Cys-1998, Cys-2000–Cys-2011, Cys-2017–Cys-2029, Cys-2024–Cys-2038, Cys-2040–Cys-2053, Cys-2061–Cys-2083, Cys-2070–Cys-2096, Cys-2084–Cys-2099, Cys-2085–Cys-2111, Cys-2131–Cys-2142, Cys-2137–Cys-2151, Cys-2153–Cys-2164, Cys-2170–Cys-2181, Cys-2176–Cys-2190, Cys-2192–Cys-2204, Cys-2210–Cys-2221, Cys-2217–Cys-2230, Cys-2232–Cys-2245, Cys-2251–Cys-2265, Cys-2258–Cys-2274, Cys-2276–Cys-2289, Cys-2295–Cys-2307, Cys-2302–Cys-2316, and Cys-2318–Cys-2331. The EGF-like 30; calcium-binding domain maps to Asp-1808–Asn-1848. Ser-1830 is a glycosylation site (O-linked (Glc) serine). One can recognise an EGF-like 31; calcium-binding domain in the interval Asp-1849–Leu-1890. A glycan (O-linked (Glc) serine) is linked at Ser-1871. The EGF-like 32; calcium-binding domain maps to Asp-1891–Ile-1929. Asn-1902 is a glycosylation site (N-linked (GlcNAc...) asparagine). Residue Ser-1911 is glycosylated (O-linked (Glc) serine). Residues Asp-1930–Val-1972 enclose the EGF-like 33; calcium-binding domain. A glycan (O-linked (Glc) serine) is linked at Ser-1953. The 40-residue stretch at Asp-1973–Glu-2012 folds into the EGF-like 34; calcium-binding domain. Residues Asp-2013–Gln-2054 form the EGF-like 35; calcium-binding domain. Ser-2035 carries O-linked (Glc) serine glycosylation. One can recognise a TB 8 domain in the interval Ser-2059–Cys-2111. A glycan (N-linked (GlcNAc...) asparagine) is linked at Asn-2077. Residues Asp-2127–Val-2165 form the EGF-like 36; calcium-binding domain. O-linked (Glc) serine glycosylation occurs at Ser-2148. The 40-residue stretch at Asp-2166–Glu-2205 folds into the EGF-like 37; calcium-binding domain. Asn-2178 carries an N-linked (GlcNAc...) asparagine glycan. In terms of domain architecture, EGF-like 38; calcium-binding spans Asp-2206–Lys-2246. An O-linked (Glc) serine glycan is attached at Ser-2227. The EGF-like 39; calcium-binding domain maps to Asp-2247 to Val-2290. The 42-residue stretch at Asp-2291–Leu-2332 folds into the EGF-like 40; calcium-binding domain. O-linked (Glc) serine glycosylation is present at Ser-2313. One can recognise a TB 9 domain in the interval Gly-2337 to Cys-2390. The 42-residue stretch at Asp-2402–Val-2443 folds into the EGF-like 41; calcium-binding domain. 21 cysteine pairs are disulfide-bonded: Cys-2406–Cys-2418, Cys-2413–Cys-2427, Cys-2429–Cys-2442, Cys-2448–Cys-2459, Cys-2455–Cys-2468, Cys-2470–Cys-2483, Cys-2489–Cys-2500, Cys-2496–Cys-2509, Cys-2511–Cys-2522, Cys-2528–Cys-2541, Cys-2535–Cys-2550, Cys-2552–Cys-2565, Cys-2571–Cys-2581, Cys-2577–Cys-2590, Cys-2592–Cys-2605, Cys-2611–Cys-2622, Cys-2617–Cys-2631, Cys-2633–Cys-2646, Cys-2652–Cys-2663, Cys-2659–Cys-2672, and Cys-2674–Cys-2686. Residues Asp-2444–Lys-2484 form the EGF-like 42; calcium-binding domain. A glycan (O-linked (Glc) serine) is linked at Ser-2465. In terms of domain architecture, EGF-like 43; calcium-binding spans Asp-2485–Ile-2523. One can recognise an EGF-like 44; calcium-binding domain in the interval Asp-2524–Glu-2566. O-linked (Glc) serine glycosylation is present at Ser-2547. The EGF-like 45; calcium-binding domain maps to Asp-2567–Val-2606. Residues Asp-2607 to Gln-2647 form the EGF-like 46; calcium-binding domain. Residue Ser-2628 is glycosylated (O-linked (Glc) serine). The EGF-like 47; calcium-binding domain occupies Asp-2648–Val-2687. Ser-2702 carries the phosphoserine; by FAM20C modification. At Ser-2709 the chain carries Phosphoserine. The segment at Arg-2726–Glu-2746 is disordered. Asn-2734 carries N-linked (GlcNAc...) asparagine glycosylation. Residues Glu-2735 to Glu-2746 show a composition bias toward polar residues. N-linked (GlcNAc...) asparagine glycans are attached at residues Asn-2750 and Asn-2767.

Belongs to the fibrillin family. In terms of assembly, interacts with COL16A1. Interacts with integrin alpha-V/beta-3. Interacts with ADAMTS10; this interaction promotes microfibril assembly. Interacts with THSD4; this interaction promotes fibril formation. Interacts (via N-terminal domain) with FBLN2 and FBLN5. Interacts with ELN. Forms a ternary complex with ELN and FBLN2 or FBLN5 and a significant interaction with ELN seen only in the presence of FBLN2 or FBLN5. Interacts (via N-terminal domain) with LTBP2 (via C-terminal domain) in a Ca(+2)-dependent manner. Interacts (via N-terminal domain) with LTBP1 (via C-terminal domain). Interacts with integrins ITGA5:ITGB1, ITGAV:ITGB3 and ITGAV:ITGB6. Interacts (via N-terminal domain) with BMP2, BMP4, BMP7, BMP10 and GDF5. Interacts (via N-terminal domain) with MFAP2 and MFAP5. Interacts with ADAMTSL5. Interacts with MFAP4. Interacts (via N-terminal domain) with TNFSF11 in a Ca(+2)-dependent manner. Interacts (via N-terminal domain) with EFEMP2; this interaction inhibits EFEMP2 binding to LOX and ELN. Post-translationally, cleavage of N- and C-terminus by furin is required for incorporation into the extracellular matrix and assembly into microfibrils. The C-terminus, which corresponds to the Asprosin chain, was initially thought to constitute a propeptide. Fibrillin-1 and Asprosin chains are still linked together during the secretion from cells, but are subsequently separated by furin, an essential step for incorporation of Fibrillin-1 into the nascent microfibrils. In terms of processing, forms intermolecular disulfide bonds either with other fibrillin-1 molecules or with other components of the microfibrils. O-glycosylated on serine residues by POGLUT2 and POGLUT3 which is necessary for efficient protein secretion.

It is found in the secreted. It localises to the extracellular space. Its subcellular location is the extracellular matrix. Functionally, structural component of the 10-12 nm diameter microfibrils of the extracellular matrix, which conveys both structural and regulatory properties to load-bearing connective tissues. Fibrillin-1-containing microfibrils provide long-term force bearing structural support. In tissues such as the lung, blood vessels and skin, microfibrils form the periphery of the elastic fiber, acting as a scaffold for the deposition of elastin. In addition, microfibrils can occur as elastin-independent networks in tissues such as the ciliary zonule, tendon, cornea and glomerulus where they provide tensile strength and have anchoring roles. Fibrillin-1 also plays a key role in tissue homeostasis through specific interactions with growth factors, such as the bone morphogenetic proteins (BMPs), growth and differentiation factors (GDFs) and latent transforming growth factor-beta-binding proteins (LTBPs), cell-surface integrins and other extracellular matrix protein and proteoglycan components. Regulates osteoblast maturation by controlling TGF-beta bioavailability and calibrating TGF-beta and BMP levels, respectively. Negatively regulates osteoclastogenesis by binding and sequestering an osteoclast differentiation and activation factor TNFSF11. This leads to disruption of TNFSF11-induced Ca(2+) signaling and impairment of TNFSF11-mediated nuclear translocation and activation of transcription factor NFATC1 which regulates genes important for osteoclast differentiation and function. Mediates cell adhesion via its binding to cell surface receptors integrins ITGAV:ITGB3 and ITGA5:ITGB1. Binds heparin and this interaction has an important role in the assembly of microfibrils. Adipokine secreted by white adipose tissue that plays an important regulatory role in the glucose metabolism of liver, muscle and pancreas. Hormone that targets the liver in response to fasting to increase plasma glucose levels. Binds the olfactory receptor OR4M1 at the surface of hepatocytes and promotes hepatocyte glucose release by activating the protein kinase A activity in the liver, resulting in rapid glucose release into the circulation. May act as a regulator of adaptive thermogenesis by inhibiting browning and energy consumption, while increasing lipid deposition in white adipose tissue. Also acts as an orexigenic hormone that increases appetite: crosses the blood brain barrier and exerts effects on the hypothalamus. In the arcuate nucleus of the hypothalamus, asprosin directly activates orexigenic AgRP neurons and indirectly inhibits anorexigenic POMC neurons, resulting in appetite stimulation. Activates orexigenic AgRP neurons via binding to the olfactory receptor OR4M1. May also play a role in sperm motility in testis via interaction with OR4M1 receptor. The sequence is that of Fibrillin-1 from Homo sapiens (Human).